The chain runs to 354 residues: Replication factor C subunit 3 (354 aa).

Position 41-48 (41-48 (GPSGSGKK)) interacts with ATP.

This sequence belongs to the activator 1 small subunits family. As to quaternary structure, heterotetramer of subunits RFC2, RFC3, RFC4 and RFC5 that can form a complex with RFC1.

Its subcellular location is the nucleus. In terms of biological role, may be involved in DNA replication and thus regulate cell proliferation. This chain is Replication factor C subunit 3 (RFC3), found in Arabidopsis thaliana (Mouse-ear cress).